The chain runs to 82 residues: Small ribosomal subunit protein uS17 (82 aa).

This sequence belongs to the universal ribosomal protein uS17 family. As to quaternary structure, part of the 30S ribosomal subunit.

In terms of biological role, one of the primary rRNA binding proteins, it binds specifically to the 5'-end of 16S ribosomal RNA. This is Small ribosomal subunit protein uS17 from Shewanella woodyi (strain ATCC 51908 / MS32).